The primary structure comprises 1021 residues: Sodium/potassium-transporting ATPase subunit alpha-1 (1021 aa).

The propeptide occupies 1–5; the sequence is MGKGG. Over residues 1–11 the composition is skewed to basic and acidic residues; it reads MGKGGGRDKYE. The disordered stretch occupies residues 1 to 37; the sequence is MGKGGGRDKYEPAAISEHGNKKKAKKERDMDELKKEV. At 6-85 the chain is on the cytoplasmic side; the sequence is GRDKYEPAAI…NALTPPPTTP (80 aa). Lys9 is subject to N6-acetyllysine. A Phosphotyrosine modification is found at Tyr10. At Ser16 the chain carries Phosphoserine; by PKC. At Lys21 the chain carries N6-acetyllysine. A compositionally biased stretch (basic and acidic residues) spans 26–37; the sequence is KERDMDELKKEV. Residues Ser38 and Ser45 each carry the phosphoserine modification. Residues 80–82 form a phosphoinositide-3 kinase binding region; the sequence is PPP. Residues 86-106 form a helical membrane-spanning segment; sequence EWVKFCRQLFGGFSMLLWIGA. Over 107 to 129 the chain is Extracellular; that stretch reads ILCFLAYGIQAATEEEPQNDNLY. The helical transmembrane segment at 130–150 threads the bilayer; that stretch reads LGVVLSAVVIITGCFSYYQEA. Residues 151–286 lie on the Cytoplasmic side of the membrane; it reads KSSKIMESFK…GGQTPIAAEI (136 aa). The disordered stretch occupies residues 214–233; it reads SSLTGESEPQTRSPDFTNEN. Ser226 is subject to Phosphoserine. At Tyr258 the chain carries Phosphotyrosine. A helical transmembrane segment spans residues 287–306; sequence EHFIHIITGVAVFLGVTFFI. Over 307–318 the chain is Extracellular; the sequence is LSLILEYTWLEA. A helical membrane pass occupies residues 319-336; sequence VIFLIGIIVANVPEGLLA. At 337-770 the chain is on the cytoplasmic side; that stretch reads TVTVCLTLTA…EEGRLIFDNL (434 aa). Asp374 functions as the 4-aspartylphosphate intermediate in the catalytic mechanism. A phosphoserine mark is found at Ser450 and Ser482. Lys485 is a binding site for ATP. Residue Tyr540 is modified to Phosphotyrosine. The segment at 594–715 is mediates interaction with SCN7A; the sequence is RAAVPDAVGK…QGAIVAVTGD (122 aa). N6-succinyllysine is present on Lys659. Ser666 bears the Phosphoserine mark. Mg(2+) is bound by residues Asp715 and Asp719. A helical membrane pass occupies residues 771–790; the sequence is KKSIAYTLTSNIPEITPFLI. At 791–800 the chain is on the extracellular side; that stretch reads FIIANIPLPL. The chain crosses the membrane as a helical span at residues 801–821; the sequence is GTVTILCIDLGTDMVPAISLA. At 822 to 841 the chain is on the cytoplasmic side; sequence YEQAESDIMKRQPRNPQTDK. A helical membrane pass occupies residues 842–864; sequence LVNERLISMAYGQIGMIQALGGF. Residues 865–916 are Extracellular-facing; sequence FTYFVILAENGFLPIHLLGLRVDWDDRWVNDVEDSYGQQWTYEQRKIVEFTC. Residues 917–936 traverse the membrane as a helical segment; the sequence is HTAFFVSIVVVQWADLVICK. Topologically, residues 937 to 949 are cytoplasmic; it reads TRRNSVFQQGMKN. Ser941 is subject to Phosphoserine; by PKA. The chain crosses the membrane as a helical span at residues 950–968; sequence KILIFGLFEETALAAFLSY. Residues 969-983 lie on the Extracellular side of the membrane; sequence CPGMGVALRMYPLKP. The chain crosses the membrane as a helical span at residues 984–1004; the sequence is TWWFCAFPYSLLIFVYDEVRK. Residues 1005–1021 are Cytoplasmic-facing; the sequence is LIIRRRPGGWVEKETYY.

It belongs to the cation transport ATPase (P-type) (TC 3.A.3) family. Type IIC subfamily. In terms of assembly, the sodium/potassium-transporting ATPase is composed of a catalytic alpha subunit, an auxiliary non-catalytic beta subunit and an additional regulatory subunit. Interacts with regulatory subunit FXYD1. Interacts with regulatory subunit FXYD3. Interacts with SIK1. Interacts with SLC35G1 and STIM1. Interacts with CLN3; this interaction regulates the sodium/potassium-transporting ATPase complex localization at the plasma membrane. Interacts with SCN7A; activates ATP1A1 P-type sodium:potassium-exchanging transporter activity which indirectly signals to nearby neurons to regulate sodium homeostasis. Post-translationally, phosphorylation on Tyr-10 modulates pumping activity. Phosphorylation of Ser-941 by PKA modulates the response of ATP1A1 to PKC. Dephosphorylation by protein phosphatase 2A (PP2A) following increases in intracellular sodium, leading to increase catalytic activity.

It is found in the cell membrane. The protein localises to the basolateral cell membrane. The protein resides in the sarcolemma. It localises to the cell projection. Its subcellular location is the axon. It is found in the melanosome. It carries out the reaction K(+)(out) + Na(+)(in) + ATP + H2O = K(+)(in) + Na(+)(out) + ADP + phosphate + H(+). Its function is as follows. This is the catalytic component of the active enzyme, which catalyzes the hydrolysis of ATP coupled with the exchange of sodium and potassium ions across the plasma membrane. This action creates the electrochemical gradient of sodium and potassium ions, providing the energy for active transport of various nutrients. Could also be part of an osmosensory signaling pathway that senses body-fluid sodium levels and controls salt intake behavior as well as voluntary water intake to regulate sodium homeostasis. This chain is Sodium/potassium-transporting ATPase subunit alpha-1 (ATP1A1), found in Equus caballus (Horse).